The sequence spans 167 residues: SAR-endolysin (167 aa).

Residues 11–31 form a helical; Signal-anchor for type II membrane protein membrane-spanning segment; it reads VIAAISGGAIAIASVLITGPG. Active-site proton donor/acceptor residues include E37 and D46.

This sequence belongs to the glycosyl hydrolase 24 family.

The protein localises to the host cell inner membrane. The enzyme catalyses Hydrolysis of (1-&gt;4)-beta-linkages between N-acetylmuramic acid and N-acetyl-D-glucosamine residues in a peptidoglycan and between N-acetyl-D-glucosamine residues in chitodextrins.. Signal-arrest-release (SAR) endolysin with lysozyme activity that degrades host peptidoglycans and participates with the pinholin and spanin proteins in the sequential events which lead to programmed host cell lysis releasing the mature viral particles. Once the pinholin has permeabilized the host cell membrane, the SAR-endolysin is released into the periplasm where it breaks down the peptidoglycan layer. The chain is SAR-endolysin (19) from Bacteriophage PS34.